We begin with the raw amino-acid sequence, 371 residues long: Flagellar P-ring protein (371 aa).

The signal sequence occupies residues 1–21 (MSRSFFATVLGLALAAMTVMA).

This sequence belongs to the FlgI family. In terms of assembly, the basal body constitutes a major portion of the flagellar organelle and consists of four rings (L,P,S, and M) mounted on a central rod.

It is found in the periplasm. The protein localises to the bacterial flagellum basal body. Its function is as follows. Assembles around the rod to form the L-ring and probably protects the motor/basal body from shearing forces during rotation. The protein is Flagellar P-ring protein of Caulobacter sp. (strain K31).